We begin with the raw amino-acid sequence, 433 residues long: Tol-Pal system protein TolB (433 aa).

The N-terminal stretch at 1-21 (MIKRLRGLLVLLCCVAGMAMA) is a signal peptide.

Belongs to the TolB family. The Tol-Pal system is composed of five core proteins: the inner membrane proteins TolA, TolQ and TolR, the periplasmic protein TolB and the outer membrane protein Pal. They form a network linking the inner and outer membranes and the peptidoglycan layer.

The protein localises to the periplasm. Part of the Tol-Pal system, which plays a role in outer membrane invagination during cell division and is important for maintaining outer membrane integrity. This is Tol-Pal system protein TolB from Pseudomonas entomophila (strain L48).